Reading from the N-terminus, the 320-residue chain is o-succinylbenzoate synthase (320 aa).

Lys133 acts as the Proton donor in catalysis. Mg(2+) is bound by residues Asp161, Glu190, and Asp213. The active-site Proton acceptor is the Lys235.

The protein belongs to the mandelate racemase/muconate lactonizing enzyme family. MenC type 1 subfamily. The cofactor is a divalent metal cation.

The catalysed reaction is (1R,6R)-6-hydroxy-2-succinyl-cyclohexa-2,4-diene-1-carboxylate = 2-succinylbenzoate + H2O. It functions in the pathway quinol/quinone metabolism; 1,4-dihydroxy-2-naphthoate biosynthesis; 1,4-dihydroxy-2-naphthoate from chorismate: step 4/7. Its pathway is quinol/quinone metabolism; menaquinone biosynthesis. Functionally, converts 2-succinyl-6-hydroxy-2,4-cyclohexadiene-1-carboxylate (SHCHC) to 2-succinylbenzoate (OSB). In Salmonella typhi, this protein is o-succinylbenzoate synthase.